The chain runs to 136 residues: Histone H3 (136 aa).

Residues 1-43 are disordered; the sequence is MARTKQTARKNVGGKAPRKHIGQKSARKTASTTAGMKKPHRYR. An N6-methylated lysine modification is found at Lys10. Lys15 and Lys24 each carry N6-acetyllysine. A compositionally biased stretch (basic residues) spans 16-27; the sequence is APRKHIGQKSAR. N6-methylated lysine is present on residues Lys28 and Lys37.

The protein belongs to the histone H3 family. As to quaternary structure, the nucleosome is a histone octamer containing two molecules each of H2A, H2B, H3 and H4 assembled in one H3-H4 heterotetramer and two H2A-H2B heterodimers. The octamer wraps approximately 147 bp of DNA.

It is found in the nucleus. It localises to the chromosome. In terms of biological role, core component of nucleosome. Nucleosomes wrap and compact DNA into chromatin, limiting DNA accessibility to the cellular machineries which require DNA as a template. Histones thereby play a central role in transcription regulation, DNA repair, DNA replication and chromosomal stability. DNA accessibility is regulated via a complex set of post-translational modifications of histones, also called histone code, and nucleosome remodeling. The protein is Histone H3 of Euplotes crassus.